Reading from the N-terminus, the 323-residue chain is Sodium/potassium-transporting ATPase subunit beta-2 (323 aa).

Topologically, residues 1–50 (MPTITEDCIDGFQQYYSRPPERPKKKSLKQMVYDSEDNSYFGRSMDSWAK) are cytoplasmic. Residues 51 to 71 (IGIFYVAFYGVLAALVAICMW) form a helical; Signal-anchor for type II membrane protein membrane-spanning segment. Topologically, residues 72-323 (AFFQTLDPRI…GSVHYELLID (252 aa)) are extracellular. Cystine bridges form between Cys153–Cys165 and Cys175–Cys189. 2 N-linked (GlcNAc...) asparagine glycosylation sites follow: Asn180 and Asn206. Cys241 and Cys298 are joined by a disulfide.

This sequence belongs to the X(+)/potassium ATPases subunit beta family. As to quaternary structure, the sodium/potassium-transporting ATPase is composed of a catalytic alpha subunit, an auxiliary non-catalytic beta subunit and an additional regulatory subunit. As to expression, in embryos, it is expressed in the neurons of the CNS and PNS, in Garland cells and posterior spiracles. In adults, it shows a nervous system specific distribution: optic lobes, brain, thoracic ganglia and axonal pathways in the leg. Both isoforms concentrate in the adult head, isoform 2.2 being predominant. Both isoforms are weakly expressed in the thorax and very poorly expressed in the abdomen.

It is found in the cell membrane. Its function is as follows. This is the non-catalytic component of the active enzyme, which catalyzes the hydrolysis of ATP coupled with the exchange of Na(+) and K(+) ions across the plasma membrane. The beta subunit regulates, through assembly of alpha/beta heterodimers, the number of sodium pumps transported to the plasma membrane. This is Sodium/potassium-transporting ATPase subunit beta-2 (nrv2) from Drosophila melanogaster (Fruit fly).